The sequence spans 155 residues: Putative pre-16S rRNA nuclease (155 aa).

This sequence belongs to the YqgF nuclease family.

It localises to the cytoplasm. In terms of biological role, could be a nuclease involved in processing of the 5'-end of pre-16S rRNA. The sequence is that of Putative pre-16S rRNA nuclease from Xanthomonas axonopodis pv. citri (strain 306).